The chain runs to 77 residues: Conotoxin G11.1 (77 aa).

The first 20 residues, 1-20 (MKLFLAIVLILMLQFLSTGA), serve as a signal peptide directing secretion. The propeptide occupies 21–45 (ETSDNHASRSTTALRDWLLGPKAKR). 4 cysteine pairs are disulfide-bonded: Cys-46–Cys-60, Cys-53–Cys-65, Cys-59–Cys-69, and Cys-64–Cys-76.

The protein belongs to the conotoxin I3 superfamily. Expressed by the venom duct.

The protein resides in the secreted. May embed in the membrane and bind to the voltage sensor domain of a ion channel. Does not induce paralysis when injected in fish, leading to the hypothesis that it may be part of the sedative nirvana cabal. This chain is Conotoxin G11.1, found in Conus geographus (Geography cone).